Here is a 364-residue protein sequence, read N- to C-terminus: Aminomethyltransferase (364 aa).

This sequence belongs to the GcvT family. The glycine cleavage system is composed of four proteins: P, T, L and H.

The catalysed reaction is N(6)-[(R)-S(8)-aminomethyldihydrolipoyl]-L-lysyl-[protein] + (6S)-5,6,7,8-tetrahydrofolate = N(6)-[(R)-dihydrolipoyl]-L-lysyl-[protein] + (6R)-5,10-methylene-5,6,7,8-tetrahydrofolate + NH4(+). In terms of biological role, the glycine cleavage system catalyzes the degradation of glycine. The protein is Aminomethyltransferase of Shigella sonnei (strain Ss046).